The chain runs to 101 residues: uncharacterized protein (101 aa).

Helical transmembrane passes span 10–30 and 67–87; these read VLAI…IGSI and IILG…ILSI.

It localises to the membrane. This is an uncharacterized protein from Acanthamoeba polyphaga (Amoeba).